The sequence spans 173 residues: Insertion element IS150 protein InsJ (173 aa).

This sequence belongs to the IS150/IS1296 orfA family.

This Escherichia coli (strain K12) protein is Insertion element IS150 protein InsJ (insJ).